A 206-amino-acid polypeptide reads, in one-letter code: Small ribosomal subunit protein uS4 (206 aa).

The S4 RNA-binding domain maps to C96–V156.

The protein belongs to the universal ribosomal protein uS4 family. In terms of assembly, part of the 30S ribosomal subunit. Contacts protein S5. The interaction surface between S4 and S5 is involved in control of translational fidelity.

One of the primary rRNA binding proteins, it binds directly to 16S rRNA where it nucleates assembly of the body of the 30S subunit. In terms of biological role, with S5 and S12 plays an important role in translational accuracy. This Pseudomonas fluorescens (strain Pf0-1) protein is Small ribosomal subunit protein uS4.